Reading from the N-terminus, the 87-residue chain is Large ribosomal subunit protein eL20 (87 aa).

Belongs to the eukaryotic ribosomal protein eL20 family. Part of the 50S ribosomal subunit. Binds 23S rRNA.

The polypeptide is Large ribosomal subunit protein eL20 (Hyperthermus butylicus (strain DSM 5456 / JCM 9403 / PLM1-5)).